The following is a 176-amino-acid chain: NAD(P)H-quinone oxidoreductase subunit 6, chloroplastic (176 aa).

5 helical membrane passes run 10-30 (FLLV…VLLT), 32-52 (PIYS…FYIL), 61-81 (AQLL…VMFM), 92-112 (LWTL…LSLI), and 152-172 (FFLP…GAIA).

Belongs to the complex I subunit 6 family. As to quaternary structure, NDH is composed of at least 16 different subunits, 5 of which are encoded in the nucleus.

The protein resides in the plastid. The protein localises to the chloroplast thylakoid membrane. It catalyses the reaction a plastoquinone + NADH + (n+1) H(+)(in) = a plastoquinol + NAD(+) + n H(+)(out). The catalysed reaction is a plastoquinone + NADPH + (n+1) H(+)(in) = a plastoquinol + NADP(+) + n H(+)(out). NDH shuttles electrons from NAD(P)H:plastoquinone, via FMN and iron-sulfur (Fe-S) centers, to quinones in the photosynthetic chain and possibly in a chloroplast respiratory chain. The immediate electron acceptor for the enzyme in this species is believed to be plastoquinone. Couples the redox reaction to proton translocation, and thus conserves the redox energy in a proton gradient. The protein is NAD(P)H-quinone oxidoreductase subunit 6, chloroplastic (ndhG) of Pelargonium hortorum (Common geranium).